Consider the following 356-residue polypeptide: MRVSSSLIALAALAVQALALPVNELAERDTGLDVKLIPIGNTRVKAIITNNADHEMSFVKYNTLFDSSPVRKVQISKDGSIVPFNGMRLYYDINNLPKEAYKTLAPGASAEAEFDIAETSDLSAGGSFEISAEGSIPVIDGQGTKPTGSIRFKANVLTMDIDGEMASKVASAIPELDKRTRVDGQTCTGQYAQLLQGGLRNCVTYAQRAAQAASGGNAQKFQEYFKTTSQQARQSVARRFQAIAQECSSANQGRTIYFCQDIYRNCQRGLIAYTIPARSHVVNCPDYWRLPPVVNRGLDPDHGYVVVHEFTHATSIFSPGTVDHAYGYEQCRRLNAQQSLSNADNYSLFAADVTRN.

Residues 1–19 (MRVSSSLIALAALAVQALA) form the signal peptide. The propeptide occupies 20–179 (LPVNELAERD…ASAIPELDKR (160 aa)). 2 cysteine pairs are disulfide-bonded: cysteine 187-cysteine 259 and cysteine 266-cysteine 284. Histidine 308 contributes to the Zn(2+) binding site. The active site involves glutamate 309. Positions 312 and 323 each coordinate Zn(2+).

This sequence belongs to the peptidase M35 family. Requires Zn(2+) as cofactor.

The protein localises to the secreted. It catalyses the reaction Preferential cleavage of bonds with hydrophobic residues in P1'. Also 3-Asn-|-Gln-4 and 8-Gly-|-Ser-9 bonds in insulin B chain.. Secreted metalloproteinase that allows assimilation of proteinaceous substrates. Shows high activities on basic nuclear substrates such as histone and protamine. May be involved in virulence. The protein is Neutral protease 2 homolog MEP5 (MEP5) of Coccidioides posadasii (strain C735) (Valley fever fungus).